The sequence spans 891 residues: MAPKQKKKTSRGKKRLKPVLAASEDMEPVNMESMGHPEIYPLVLTTKTQEIFNCRIDEDVTDEQPYKLINKEDIFEDLRNRAAVSDFHPVKKIVQEYPGNELLLVYDKDFKYGLNFYLIATEEGKENYLNPPEVPEEQEEYKEHIPEDVYIYKPPVSKPWVSLGSEKEIEEESVTESTKQITYMISRKRSEFGAPIKFSDQNASSVKDAYIECTAYPDKNFTLKQLEKDVGMQVIPQIKDISTQTKWTYPKNATTQYYPREFSEEEKETLKQSKPLVDFLNNASISVEIALQQNEIMNTFIDDWKYLAEEEGTFGDKTDTHLKEYQSFTDLHSPTEKMITCVSWHPTIYGLIAVSVAVRLSFEDRVHFSGKLLLQPSLILFWSFSDPIHPQLMLESPDDIFCFKFCPSDPNIIAGGCINGQIVMWDITAHADRIENIKAGGSRSKRATLKPMFLLEPESNKEAMYIRHCAVSSIENGHKKVITDIHWLSDTFEINRMGSVFENRSGICCQLVTCSADCTICFWDIRPQKPLTPQTTEKKKEESIEIPFDVPSTFLHLDLSWKPLTKVRLSKGETSLDHCPTKISLNEDHLLCKTQDKMLAQSKTEKAEEMNPYHNLESGMANLLKPIDDFCTKFFVGTEEGEVIYTDWKMEKDPETGRLMSKKPVSHHTIHDGTVHTIQRSPFYNDIILTVGGWNVAIWKEGVMTGPLLQSCCAPKRYTSGHWSLTRPGVFYIGREDGYIDIWDLLEKTHEPAQSQNICITMITYIKPWIFSSKQQFIATADYYGTLHILEIPWTLSRPSTNEMASVNHYFEREVKHLEYVEQRKKIREQEKKEMELEMAKKKVKTYQKSKEQMQAELKMDYESYLELEKTVLINLGLIKVTEKGSYMEVM.

The segment covering methionine 1–lysine 17 has biased composition (basic residues). Positions methionine 1 to alanine 22 are disordered. WD repeat units follow at residues glutamate 395 to glutamate 435, glycine 477 to proline 533, isoleucine 670 to leucine 709, and cysteine 713 to alanine 753. The stretch at leucine 818 to aspartate 861 forms a coiled coil.

As to quaternary structure, interacts with ACTR2; this interaction reduces binding of the Arp2/3 complex to the VCA domain of nucleation promoting factors. Part of the multisubunit axonemal dynein complex formed at least of two heavy chains and a number of intermediate and light chains. Found in a associated with the catalytic heavy chain DNAH2, the intermediate chain DNAI4, and the light chain DYNLT1.

It is found in the cytoplasm. Its function is as follows. Acts as a negative regulator of cell migration, invasion, and metastasis downstream of p53/TP53, through inhibition of Arp2/3 complex-mediated actin polymerization. Via its association with the multisubunit axonemal dynein complex, is potentially involved in the regulation of cilia function. May play a role in osteogenesis of dental tissue-derived mesenchymal stem cells. The polypeptide is Dynein axonemal intermediate chain 3 (Homo sapiens (Human)).